Reading from the N-terminus, the 212-residue chain is Peptide methionine sulfoxide reductase MsrA (212 aa).

Cys52 is a catalytic residue.

It belongs to the MsrA Met sulfoxide reductase family.

The catalysed reaction is L-methionyl-[protein] + [thioredoxin]-disulfide + H2O = L-methionyl-(S)-S-oxide-[protein] + [thioredoxin]-dithiol. It catalyses the reaction [thioredoxin]-disulfide + L-methionine + H2O = L-methionine (S)-S-oxide + [thioredoxin]-dithiol. Has an important function as a repair enzyme for proteins that have been inactivated by oxidation. Catalyzes the reversible oxidation-reduction of methionine sulfoxide in proteins to methionine. This is Peptide methionine sulfoxide reductase MsrA from Salmonella agona (strain SL483).